A 259-amino-acid chain; its full sequence is MVEFKILEKRPDSIKFIVSGVDVPFANALRRTILSEVPTFAVDEVEFLENDSALFDEIIAHRLAMIPLTTPHERFSLDALELDDYTVTLSLEAEGPGMVYSGDLKSSDGDVKPANPNIPIVKLAEGQRLTFNAYARLGRGKDHAKWQPGFVYYKYLTKIHVSKDVPDWEELKELAERRGLPVEESDEEIVITTIKAFYLPRKFEEHMGKGIREEIVPGSFVFTVETNGELPVEEIVSIALKILMRKSDRFINELHKLAD.

This sequence belongs to the archaeal Rpo3/eukaryotic RPB3 RNA polymerase subunit family. In terms of assembly, part of the RNA polymerase complex.

Its subcellular location is the cytoplasm. It carries out the reaction RNA(n) + a ribonucleoside 5'-triphosphate = RNA(n+1) + diphosphate. DNA-dependent RNA polymerase (RNAP) catalyzes the transcription of DNA into RNA using the four ribonucleoside triphosphates as substrates. The polypeptide is DNA-directed RNA polymerase subunit Rpo3 (Thermococcus kodakarensis (strain ATCC BAA-918 / JCM 12380 / KOD1) (Pyrococcus kodakaraensis (strain KOD1))).